The chain runs to 446 residues: 3-phosphoshikimate 1-carboxyvinyltransferase (446 aa).

A disordered region spans residues 1–20 (MIMAKPLSSRRAAPLAGSAP). 3-phosphoshikimate contacts are provided by lysine 25, serine 26, and arginine 30. Lysine 25 is a phosphoenolpyruvate binding site. The phosphoenolpyruvate site is built by glycine 98 and arginine 126. Serine 171, glutamine 173, aspartate 324, and lysine 351 together coordinate 3-phosphoshikimate. Glutamine 173 serves as a coordination point for phosphoenolpyruvate. Aspartate 324 functions as the Proton acceptor in the catalytic mechanism. Arginine 355 and arginine 399 together coordinate phosphoenolpyruvate.

The protein belongs to the EPSP synthase family. In terms of assembly, monomer.

Its subcellular location is the cytoplasm. It carries out the reaction 3-phosphoshikimate + phosphoenolpyruvate = 5-O-(1-carboxyvinyl)-3-phosphoshikimate + phosphate. The protein operates within metabolic intermediate biosynthesis; chorismate biosynthesis; chorismate from D-erythrose 4-phosphate and phosphoenolpyruvate: step 6/7. In terms of biological role, catalyzes the transfer of the enolpyruvyl moiety of phosphoenolpyruvate (PEP) to the 5-hydroxyl of shikimate-3-phosphate (S3P) to produce enolpyruvyl shikimate-3-phosphate and inorganic phosphate. In Paramagnetospirillum magneticum (strain ATCC 700264 / AMB-1) (Magnetospirillum magneticum), this protein is 3-phosphoshikimate 1-carboxyvinyltransferase.